Consider the following 199-residue polypeptide: MSRVLVIESSARQEGSVSRQLTAEFLARWKAAHPNDEIVVRDLANEPVPHLDIDLLGGWTKPAEQQSEAEKAALARSERLTGELLGADVLVLAAPMYNFAIPSTLKAWLDHVLRAGVTFKYTENGPQGLLSGKRAFVLTARGGIYAGSPLDHQEPYLRQALGFIGIHDVSFIHAEGLNMGGDFQQKGLARAKEKLAQVA.

FMN-binding positions include Ser-10, 16-18, and 96-99; these read SVS and MYNF.

The protein belongs to the azoreductase type 1 family. Homodimer. FMN serves as cofactor.

It carries out the reaction 2 a quinone + NADH + H(+) = 2 a 1,4-benzosemiquinone + NAD(+). The catalysed reaction is N,N-dimethyl-1,4-phenylenediamine + anthranilate + 2 NAD(+) = 2-(4-dimethylaminophenyl)diazenylbenzoate + 2 NADH + 2 H(+). In terms of biological role, quinone reductase that provides resistance to thiol-specific stress caused by electrophilic quinones. Its function is as follows. Also exhibits azoreductase activity. Catalyzes the reductive cleavage of the azo bond in aromatic azo compounds to the corresponding amines. The sequence is that of FMN-dependent NADH:quinone oxidoreductase from Azotobacter vinelandii (strain DJ / ATCC BAA-1303).